The sequence spans 182 residues: Sperm acrosome-associated protein 7 (182 aa).

A signal peptide spans M1–L24. N-linked (GlcNAc...) asparagine glycosylation is present at N40. Positions L112 to P140 are enriched in basic and acidic residues. Residues L112–V154 form a disordered region.

In terms of tissue distribution, testis-specific. Expressed in zygotene and pachytene spermatocytes, round spermatids, elongating spermatids and spermatozoa (at protein level). Testis-specific.

It is found in the secreted. It localises to the cytoplasmic vesicle. The protein localises to the secretory vesicle. The protein resides in the acrosome lumen. In terms of biological role, involved in fertilization. Seems not to play a direct role in sperm-egg binding or gamete fusion. The sequence is that of Sperm acrosome-associated protein 7 from Mus musculus (Mouse).